The chain runs to 309 residues: Porphobilinogen deaminase (309 aa).

Position 241 is an S-(dipyrrolylmethanemethyl)cysteine (C241).

This sequence belongs to the HMBS family. In terms of assembly, monomer. Requires dipyrromethane as cofactor.

The catalysed reaction is 4 porphobilinogen + H2O = hydroxymethylbilane + 4 NH4(+). It participates in porphyrin-containing compound metabolism; protoporphyrin-IX biosynthesis; coproporphyrinogen-III from 5-aminolevulinate: step 2/4. Tetrapolymerization of the monopyrrole PBG into the hydroxymethylbilane pre-uroporphyrinogen in several discrete steps. The polypeptide is Porphobilinogen deaminase (Bacillus thuringiensis subsp. konkukian (strain 97-27)).